The chain runs to 531 residues: Polyamine transporter PUT1 (531 aa).

The segment at 1–76 is disordered; it reads MADTGGRPEV…LPDGDAGGPM (76 aa). A compositionally biased stretch (low complexity) spans 17-33; it reads SPGHPAASTTAAAAADL. A compositionally biased stretch (basic and acidic residues) spans 34–44; it reads GHADTGQEKPT. 12 consecutive transmembrane segments (helical) span residues 83-103, 113-133, 147-167, 193-213, 224-244, 262-284, 296-316, 341-361, 391-411, 414-434, 453-473, and 476-496; these read VSMI…PFGI, LLAI…EALI, YVVW…GWMK, LGGG…LTLL, VAIC…LIAL, WNLY…TLAG, ALFY…LAGT, AWLM…MFVA, TPLA…MMSF, IVAA…VAFI, TAGC…VLAL, and LKVA…QPAL.

It belongs to the amino acid-polyamine-organocation (APC) superfamily. Polyamine:cation symporter (PHS) (TC 2.A.3.12) family. Expressed in seedling roots, leaves, stems, flowers and siliques.

Its subcellular location is the cell membrane. Its function is as follows. Cell membrane polyamine/proton symporter involved in the polyamine uptake in cells. Possesses high affinity for spermidine and lower affinity for spermine and putrescine. Transports paraquat, a polyamine analog, and thus confers sensitivity to this chemical which is used as a herbicide. In Oryza sativa subsp. japonica (Rice), this protein is Polyamine transporter PUT1 (PUT1).